Here is a 536-residue protein sequence, read N- to C-terminus: Caspase recruitment domain-containing protein 9 (536 aa).

Serine 2 bears the Phosphoserine mark. Positions 3, 10, and 73 each coordinate Zn(2+). The region spanning 6 to 98 (NDDECWSVLE…QLYKKVTGKE (93 aa)) is the CARD domain. The segment at 99–116 (PARVFSMIIDASGESGLT) is linker. Coiled coils occupy residues 117-277 (QLLM…DRSS) and 332-419 (LRKD…QQLE). A Glycyl lysine isopeptide (Lys-Gly) (interchain with G-Cter in ubiquitin) cross-link involves residue lysine 125. Residue threonine 231 is modified to Phosphothreonine. Serine 277 is modified (phosphoserine). Phosphoserine occurs at positions 424, 425, 431, 450, 460, 483, and 498. The interval 427–536 (LEDGSPRRSQ…GSDNTDTEGS (110 aa)) is disordered. A compositionally biased stretch (basic and acidic residues) spans 487 to 502 (PPEKERRRLKESFENY). Residues 503–513 (RRKRALRKMQK) are compositionally biased toward basic residues. Threonine 531 and threonine 533 each carry phosphothreonine; by CK2.

Monomer. Homodimer; homodimerization is mediated by the CARD domain which forms an extensive interaction with the adjacent linker and coiled-coil regions; leads to an autoinhibited state. Homomultimer; polymerizes following activation, forming a nucleating helical template that seeds BCL10-filament formation via a CARD-CARD interaction. Interacts (via CARD domain) with BCL10 (via CARD domain); interaction takes place following CARD9 activation and polymerization, leading to the formation of a filamentous CBM complex assembly. Component of a CBM complex (CARD9-BCL10, MALT1), composed of CARD9, BCL10 and MALT1. Interacts with RASGRF1. Interacts with NOD2 (via NACHT domain); interaction is direct. Interacts with RIPK2. Interacts with VHL; without leading to protein degradation. In terms of processing, phosphorylated at Thr-231 by PRKCD downstream of C-type lectin receptors activation: phosphorylation promotes interaction with BCL10, followed by activation of NF-kappa-B and MAP kinase p38 pathways. Phosphorylated at Thr-531 and Thr-533 by CK2 following interaction with VHL, leading to inhibit the ability to activate NF-kappa-B. Post-translationally, ubiquitinated at Lys-125 via 'Lys-27'-linked ubiquitin by TRIM62 downstream of C-type lectin receptors activation; leading to CARD9 activation, followed by activation of NF-kappa-B and MAP kinase p38 pathways. Deubiquitinated at Lys-125 by USP15, inhibiting CARD9. As to expression, expression is restricted to several populations of phagocytes, such as macrophages, monocytes, and dendritic cells. Highly expressed in spleen. Also detected in liver, placenta, lung, peripheral blood leukocytes and in brain.

The protein resides in the cytoplasm. With respect to regulation, maintained in an autoinhibited state via homodimerization in which the CARD domain forms an extensive interaction with the adjacent linker and coiled-coil regions. Activation downstream of C-type lectin receptors, by phosphorylation by PRKCD and/or ubiquitination by TRIM62, triggers disruption of the CARD domain-coiled coil interface, CARD9 homooligomerization and BCL10 recruitment, followed by activation of NF-kappa-B and MAP kinase p38 pathways. Zinc-binding inhibits activation by stabilizing the CARD ground-state conformation and restricting its capacity to form BCL10-nucleating filaments. Functionally, adapter protein that plays a key role in innate immune response against fungi by forming signaling complexes downstream of C-type lectin receptors. CARD9-mediated signals are essential for antifungal immunity against a subset of fungi from the phylum Ascomycota. Transduces signals in myeloid cells downstream of C-type lectin receptors CLEC7A (dectin-1), CLEC6A (dectin-2) and CLEC4E (Mincle), which detect pathogen-associated molecular pattern metabolites (PAMPs), such as fungal carbohydrates, and trigger CARD9 activation. Upon activation, CARD9 homooligomerizes to form a nucleating helical template that recruits BCL10 via CARD-CARD interaction, thereby promoting polymerization of BCL10 and subsequent recruitment of MALT1: this leads to activation of NF-kappa-B and MAP kinase p38 (MAPK11, MAPK12, MAPK13 and/or MAPK14) pathways which stimulate expression of genes encoding pro-inflammatory cytokines and chemokines. CARD9 signaling in antigen-presenting cells links innate sensing of fungi to the activation of adaptive immunity and provides a cytokine milieu that induces the development and subsequent of interleukin 17-producing T helper (Th17) cells. Also involved in activation of myeloid cells via classical ITAM-associated receptors and TLR: required for TLR-mediated activation of MAPK, while it is not required for TLR-induced activation of NF-kappa-B. CARD9 can also be engaged independently of BCL10: forms a complex with RASGRF1 downstream of C-type lectin receptors, which recruits and activates HRAS, leading to ERK activation and the production of cytokines. Acts as an important regulator of the intestinal commensal fungi (mycobiota) component of the gut microbiota. Plays an essential role in antifungal immunity against dissemination of gut fungi: acts by promoting induction of antifungal IgG antibodies response in CX3CR1(+) macrophages to confer protection against disseminated C.albicans or C.auris infection. Also mediates immunity against other pathogens, such as certain bacteria, viruses and parasites; CARD9 signaling is however redundant with other innate immune responses. In response to L.monocytogenes infection, required for the production of inflammatory cytokines activated by intracellular peptidoglycan: acts by connecting NOD2 recognition of peptidoglycan to downstream activation of MAP kinases (MAPK) without activating NF-kappa-B. The chain is Caspase recruitment domain-containing protein 9 from Homo sapiens (Human).